Here is an 881-residue protein sequence, read N- to C-terminus: Translation initiation factor IF-2 (881 aa).

2 disordered regions span residues 53 to 92 (RSHGKPEQAPEESDQSAKKITLNRRKQQEVTVNSGRSKTT) and 163 to 292 (AEAE…FERP). Over residues 81-92 (EVTVNSGRSKTT) the composition is skewed to polar residues. The span at 172–186 (EAAAAAKAAEALAAA) shows a compositional bias: low complexity. Positions 219–236 (RNDDRNNRSAPRNERGPG) are enriched in basic and acidic residues. Positions 254 to 263 (GNSNNSNTRG) are enriched in low complexity. The 170-residue stretch at 380–549 (QRPPVVTIMG…SIQAELLELK (170 aa)) folds into the tr-type G domain. The G1 stretch occupies residues 389–396 (GHVDHGKT). 389 to 396 (GHVDHGKT) contributes to the GTP binding site. Residues 414-418 (GITQH) form a G2 region. Residues 435 to 438 (DTPG) are G3. Residues 435–439 (DTPGH) and 489–492 (NKID) contribute to the GTP site. The tract at residues 489–492 (NKID) is G4. The G5 stretch occupies residues 525 to 527 (SAK).

This sequence belongs to the TRAFAC class translation factor GTPase superfamily. Classic translation factor GTPase family. IF-2 subfamily.

The protein localises to the cytoplasm. One of the essential components for the initiation of protein synthesis. Protects formylmethionyl-tRNA from spontaneous hydrolysis and promotes its binding to the 30S ribosomal subunits. Also involved in the hydrolysis of GTP during the formation of the 70S ribosomal complex. The chain is Translation initiation factor IF-2 from Stenotrophomonas maltophilia (strain K279a).